Reading from the N-terminus, the 185-residue chain is Ribosome-recycling factor (185 aa).

It belongs to the RRF family.

It localises to the cytoplasm. Functionally, responsible for the release of ribosomes from messenger RNA at the termination of protein biosynthesis. May increase the efficiency of translation by recycling ribosomes from one round of translation to another. The chain is Ribosome-recycling factor from Tolumonas auensis (strain DSM 9187 / NBRC 110442 / TA 4).